Reading from the N-terminus, the 302-residue chain is Bifunctional phosphoglucose/phosphomannose isomerase (302 aa).

Residues 27-160 (VEGEVVRIEA…KVYGIDVKIP (134 aa)) enclose the SIS domain. Positions 47, 48, 87, 89, 92, and 135 each coordinate D-fructose 6-phosphate. D-glucose 6-phosphate-binding residues include Gly47, Ser48, Ser87, Ser89, Thr92, and Arg135. Residue Glu203 is the Proton acceptor of the active site. D-fructose 6-phosphate is bound by residues His219 and Lys298. D-glucose 6-phosphate-binding residues include His219 and Lys298. The active-site Proton donor is His219. Lys298 functions as the Proton acceptor in the catalytic mechanism.

The protein belongs to the PGI/PMI family. Homodimer.

It is found in the cytoplasm. It carries out the reaction alpha-D-glucose 6-phosphate = beta-D-fructose 6-phosphate. The catalysed reaction is D-mannose 6-phosphate = D-fructose 6-phosphate. Its activity is regulated as follows. Inhibited by 5-phosphoarabinonate (PAB) and 6-phosphogluconate. Functionally, dual specificity isomerase that catalyzes the isomerization of both glucose-6-phosphate and mannose-6-phosphate to fructose-6-phosphate with similar catalytic efficiency. In Pyrobaculum aerophilum (strain ATCC 51768 / DSM 7523 / JCM 9630 / CIP 104966 / NBRC 100827 / IM2), this protein is Bifunctional phosphoglucose/phosphomannose isomerase.